The following is a 578-amino-acid chain: Adenine deaminase (578 aa).

Belongs to the metallo-dependent hydrolases superfamily. Adenine deaminase family. Requires Mn(2+) as cofactor.

It catalyses the reaction adenine + H2O + H(+) = hypoxanthine + NH4(+). In Ligilactobacillus salivarius (strain UCC118) (Lactobacillus salivarius), this protein is Adenine deaminase.